Consider the following 1090-residue polypeptide: UPF0507 protein C1Q_01007 (1090 aa).

The region spanning 289–436 is the VPS9 domain; it reads FSVNQLLTDF…FEDFNKNTGN (148 aa).

Belongs to the UPF0507 family.

The protein is UPF0507 protein C1Q_01007 of Saccharomyces cerevisiae (strain JAY291) (Baker's yeast).